The chain runs to 496 residues: Hemophilin secretion modulator (496 aa).

The N-terminal stretch at 1 to 19 (MKRTLLCCLTLLSCPFLYA) is a signal peptide. 14 beta stranded membrane passes run 198 to 208 (WQGSVSAGYTY), 253 to 263 (DYEASLIKRYA), 268 to 277 (HGVALRALAF), 291 to 301 (TININAGYSYF), 305 to 315 (NQIGVSPLFEH), 327 to 337 (WGARAEWMHFI), 341 to 351 (KAFKLEAESKD), 365 to 374 (SSAFATFWKI), 380 to 389 (TFFGGLDVLD), 403 to 413 (QGVRLGLSKSW), 418 to 427 (NTTLLSSYRW), 446 to 455 (QNHTFVVQMP), 462 to 472 (MTPNLTYRYNH), and 486 to 495 (HNISFKLEHR).

The protein belongs to the Slam family.

Its subcellular location is the cell outer membrane. In terms of biological role, part of a high affinity heme acquisition system. Mediates the secretion of the hemophilin HphA across the outer membrane into the extracellular environment. Plays a supporting role for full virulence. The polypeptide is Hemophilin secretion modulator (Acinetobacter baumannii).